The following is a 665-amino-acid chain: Fructose-1,6-bisphosphatase class 3 (665 aa).

Belongs to the FBPase class 3 family. The cofactor is Mn(2+).

It catalyses the reaction beta-D-fructose 1,6-bisphosphate + H2O = beta-D-fructose 6-phosphate + phosphate. It participates in carbohydrate biosynthesis; gluconeogenesis. The polypeptide is Fructose-1,6-bisphosphatase class 3 (Clostridium novyi (strain NT)).